The following is a 487-amino-acid chain: N-succinylglutamate 5-semialdehyde dehydrogenase (487 aa).

221–226 lines the NAD(+) pocket; that stretch reads GSSDTG. Residues Glu244 and Cys278 contribute to the active site.

The protein belongs to the aldehyde dehydrogenase family. AstD subfamily.

It catalyses the reaction N-succinyl-L-glutamate 5-semialdehyde + NAD(+) + H2O = N-succinyl-L-glutamate + NADH + 2 H(+). Its pathway is amino-acid degradation; L-arginine degradation via AST pathway; L-glutamate and succinate from L-arginine: step 4/5. Catalyzes the NAD-dependent reduction of succinylglutamate semialdehyde into succinylglutamate. This is N-succinylglutamate 5-semialdehyde dehydrogenase from Burkholderia orbicola (strain MC0-3).